The following is a 131-amino-acid chain: Large ribosomal subunit protein bL17 (131 aa).

It belongs to the bacterial ribosomal protein bL17 family. In terms of assembly, part of the 50S ribosomal subunit. Contacts protein L32.

The protein is Large ribosomal subunit protein bL17 of Bordetella petrii (strain ATCC BAA-461 / DSM 12804 / CCUG 43448).